Reading from the N-terminus, the 294-residue chain is Putative sugar lactone lactonase (294 aa).

3 residues coordinate a divalent metal cation: E21, N150, and D201. D201 serves as the catalytic Proton donor/acceptor.

This sequence belongs to the SMP-30/CGR1 family. The cofactor is a divalent metal cation.

Functionally, involved in the degradation of galactose via the DeLey-Doudoroff pathway. The polypeptide is Putative sugar lactone lactonase (Rhizobium meliloti (strain 1021) (Ensifer meliloti)).